The sequence spans 157 residues: Nicotinate dehydrogenase subunit A (157 aa).

The 2Fe-2S ferredoxin-type domain occupies 3–79; it reads TTISLQVNGQ…GRNITTLEGL (77 aa). Residues Cys41, Cys46, Cys49, and Cys61 each coordinate [2Fe-2S] cluster.

[2Fe-2S] cluster serves as cofactor.

The catalysed reaction is 2 Fe(III)-[cytochrome] + nicotinate + H2O = 2 Fe(II)-[cytochrome] + 6-hydroxynicotinate + 2 H(+). It functions in the pathway cofactor degradation; nicotinate degradation. In terms of biological role, subunit of the two-component enzyme NicAB that mediates nicotinate hydroxylation, the first step in the aerobic nicotinate degradation pathway. Mediates conversion of nicotinate into 6-hydroxynicotinate (6HNA). This chain is Nicotinate dehydrogenase subunit A (nicA), found in Pseudomonas putida (strain ATCC 47054 / DSM 6125 / CFBP 8728 / NCIMB 11950 / KT2440).